The chain runs to 418 residues: Dual-specificity RNA methyltransferase RlmN (418 aa).

The disordered stretch occupies residues 1–21 (MADTSLMPIPGQVDPVPAPRD). Residue Glu122 is the Proton acceptor of the active site. One can recognise a Radical SAM core domain in the interval 128–383 (DADRGTLCVS…APVRTPRGRD (256 aa)). A disulfide bond links Cys135 and Cys388. Positions 142, 146, and 149 each coordinate [4Fe-4S] cluster. Residues 212–213 (GE), Ser244, 266–268 (SLH), and Asn345 each bind S-adenosyl-L-methionine. Cys388 functions as the S-methylcysteine intermediate in the catalytic mechanism. A disordered region spans residues 393 to 418 (TAAQKKSRAERDREAAAEAEAAASQA). Positions 399 to 408 (SRAERDREAA) are enriched in basic and acidic residues.

This sequence belongs to the radical SAM superfamily. RlmN family. It depends on [4Fe-4S] cluster as a cofactor.

Its subcellular location is the cytoplasm. It catalyses the reaction adenosine(2503) in 23S rRNA + 2 reduced [2Fe-2S]-[ferredoxin] + 2 S-adenosyl-L-methionine = 2-methyladenosine(2503) in 23S rRNA + 5'-deoxyadenosine + L-methionine + 2 oxidized [2Fe-2S]-[ferredoxin] + S-adenosyl-L-homocysteine. The catalysed reaction is adenosine(37) in tRNA + 2 reduced [2Fe-2S]-[ferredoxin] + 2 S-adenosyl-L-methionine = 2-methyladenosine(37) in tRNA + 5'-deoxyadenosine + L-methionine + 2 oxidized [2Fe-2S]-[ferredoxin] + S-adenosyl-L-homocysteine. Functionally, specifically methylates position 2 of adenine 2503 in 23S rRNA and position 2 of adenine 37 in tRNAs. m2A2503 modification seems to play a crucial role in the proofreading step occurring at the peptidyl transferase center and thus would serve to optimize ribosomal fidelity. In Erythrobacter litoralis (strain HTCC2594), this protein is Dual-specificity RNA methyltransferase RlmN.